The chain runs to 950 residues: Glycine dehydrogenase (decarboxylating) (950 aa).

Position 698 is an N6-(pyridoxal phosphate)lysine (Lys-698).

The protein belongs to the GcvP family. The glycine cleavage system is composed of four proteins: P, T, L and H. The cofactor is pyridoxal 5'-phosphate.

The catalysed reaction is N(6)-[(R)-lipoyl]-L-lysyl-[glycine-cleavage complex H protein] + glycine + H(+) = N(6)-[(R)-S(8)-aminomethyldihydrolipoyl]-L-lysyl-[glycine-cleavage complex H protein] + CO2. Functionally, the glycine cleavage system catalyzes the degradation of glycine. The P protein binds the alpha-amino group of glycine through its pyridoxal phosphate cofactor; CO(2) is released and the remaining methylamine moiety is then transferred to the lipoamide cofactor of the H protein. The polypeptide is Glycine dehydrogenase (decarboxylating) (Neisseria gonorrhoeae (strain ATCC 700825 / FA 1090)).